A 248-amino-acid chain; its full sequence is Ribosomal RNA small subunit methyltransferase A (248 aa).

The S-adenosyl-L-methionine site is built by histidine 11, leucine 13, glycine 38, glutamate 60, aspartate 83, and asparagine 101.

The protein belongs to the class I-like SAM-binding methyltransferase superfamily. rRNA adenine N(6)-methyltransferase family. RsmA subfamily.

The protein resides in the cytoplasm. It catalyses the reaction adenosine(1518)/adenosine(1519) in 16S rRNA + 4 S-adenosyl-L-methionine = N(6)-dimethyladenosine(1518)/N(6)-dimethyladenosine(1519) in 16S rRNA + 4 S-adenosyl-L-homocysteine + 4 H(+). Specifically dimethylates two adjacent adenosines (A1518 and A1519) in the loop of a conserved hairpin near the 3'-end of 16S rRNA in the 30S particle. May play a critical role in biogenesis of 30S subunits. The protein is Ribosomal RNA small subunit methyltransferase A of Aquifex aeolicus (strain VF5).